A 351-amino-acid polypeptide reads, in one-letter code: GDSL esterase/lipase At4g26790 (351 aa).

Positions 1-25 are cleaved as a signal peptide; the sequence is MQRNRVLAFLLLAAQLLVKIPETCA. Catalysis depends on serine 36, which acts as the Nucleophile. The N-linked (GlcNAc...) asparagine glycan is linked to asparagine 118. Active-site residues include aspartate 326 and histidine 329.

Belongs to the 'GDSL' lipolytic enzyme family.

It is found in the secreted. This is GDSL esterase/lipase At4g26790 from Arabidopsis thaliana (Mouse-ear cress).